The following is an 86-amino-acid chain: uncharacterized protein (86 aa).

This is an uncharacterized protein from Acidianus bottle-shaped virus (isolate Italy/Pozzuoli) (ABV).